The chain runs to 378 residues: Chorismate synthase (378 aa).

R48 and R54 together coordinate NADP(+). FMN contacts are provided by residues 125–127 (RSS), 238–239 (NA), G278, 293–297 (KPTSS), and R319.

This sequence belongs to the chorismate synthase family. In terms of assembly, homotetramer. FMNH2 serves as cofactor.

The enzyme catalyses 5-O-(1-carboxyvinyl)-3-phosphoshikimate = chorismate + phosphate. The protein operates within metabolic intermediate biosynthesis; chorismate biosynthesis; chorismate from D-erythrose 4-phosphate and phosphoenolpyruvate: step 7/7. Catalyzes the anti-1,4-elimination of the C-3 phosphate and the C-6 proR hydrogen from 5-enolpyruvylshikimate-3-phosphate (EPSP) to yield chorismate, which is the branch point compound that serves as the starting substrate for the three terminal pathways of aromatic amino acid biosynthesis. This reaction introduces a second double bond into the aromatic ring system. This Azoarcus sp. (strain BH72) protein is Chorismate synthase.